The primary structure comprises 543 residues: Carotenoid 9,10(9',10')-cleavage dioxygenase 1 (543 aa).

Fe cation is bound by residues His-224, His-272, His-338, and His-528.

The protein belongs to the carotenoid oxygenase family. As to quaternary structure, homodimer. Fe(2+) is required as a cofactor.

The enzyme catalyses all-trans-zeaxanthin + 2 O2 = 4,9-dimethyldodeca-2,4,6,8,10-pentaenedial + 2 (3R)-hydroxy-beta-ionone. In terms of biological role, cleaves a variety of carotenoids at the 9-10 and 9'-10' double bonds. Probably not involved in abscisic acid biosynthesis. This Phaseolus vulgaris (Kidney bean) protein is Carotenoid 9,10(9',10')-cleavage dioxygenase 1 (CCD1).